The chain runs to 219 residues: uncharacterized protein (219 aa).

Ser23 carries the phosphoserine modification. A Glycyl lysine isopeptide (Lys-Gly) (interchain with G-Cter in SUMO) cross-link involves residue Lys137.

It is found in the cytoplasm. This is an uncharacterized protein from Saccharomyces cerevisiae (strain ATCC 204508 / S288c) (Baker's yeast).